The chain runs to 594 residues: UvrABC system protein C (594 aa).

The GIY-YIG domain maps to 13-99; that stretch reads HSSGVYQYFD…IKQLKPKYNI (87 aa). A UVR domain is found at 205 to 240; that stretch reads DKLIKELELKMERLSNNLRFEEALIYRDRIAKIQKI.

Belongs to the UvrC family. As to quaternary structure, interacts with UvrB in an incision complex.

The protein resides in the cytoplasm. Functionally, the UvrABC repair system catalyzes the recognition and processing of DNA lesions. UvrC both incises the 5' and 3' sides of the lesion. The N-terminal half is responsible for the 3' incision and the C-terminal half is responsible for the 5' incision. In Helicobacter pylori (strain Shi470), this protein is UvrABC system protein C.